An 831-amino-acid polypeptide reads, in one-letter code: uncharacterized protein (831 aa).

Residues 285 to 311 (ALNLKRQQLKEEQKEQQSTGDRSDVST) form a disordered region. 470–477 (GDTGNGKS) contacts ATP.

This is an uncharacterized protein from Bacillus subtilis (strain 168).